Consider the following 73-residue polypeptide: Large ribosomal subunit protein bL31 (73 aa).

Residues 34–43 show a composition bias toward basic and acidic residues; sequence KMNLDIDPKS. The interval 34-54 is disordered; it reads KMNLDIDPKSHPAWTGGTQQM.

Belongs to the bacterial ribosomal protein bL31 family. Type A subfamily. As to quaternary structure, part of the 50S ribosomal subunit.

Binds the 23S rRNA. The chain is Large ribosomal subunit protein bL31 from Rhodopseudomonas palustris (strain BisA53).